Consider the following 475-residue polypeptide: Protein nucleotidyltransferase YdiU (475 aa).

Residues glycine 82, glycine 84, arginine 85, lysine 105, aspartate 117, glycine 118, arginine 168, and arginine 175 each contribute to the ATP site. The active-site Proton acceptor is the aspartate 240. 2 residues coordinate Mg(2+): asparagine 241 and aspartate 250. Aspartate 250 is a binding site for ATP.

This sequence belongs to the SELO family. Requires Mg(2+) as cofactor. Mn(2+) is required as a cofactor.

It carries out the reaction L-seryl-[protein] + ATP = 3-O-(5'-adenylyl)-L-seryl-[protein] + diphosphate. It catalyses the reaction L-threonyl-[protein] + ATP = 3-O-(5'-adenylyl)-L-threonyl-[protein] + diphosphate. The catalysed reaction is L-tyrosyl-[protein] + ATP = O-(5'-adenylyl)-L-tyrosyl-[protein] + diphosphate. The enzyme catalyses L-histidyl-[protein] + UTP = N(tele)-(5'-uridylyl)-L-histidyl-[protein] + diphosphate. It carries out the reaction L-seryl-[protein] + UTP = O-(5'-uridylyl)-L-seryl-[protein] + diphosphate. It catalyses the reaction L-tyrosyl-[protein] + UTP = O-(5'-uridylyl)-L-tyrosyl-[protein] + diphosphate. In terms of biological role, nucleotidyltransferase involved in the post-translational modification of proteins. It can catalyze the addition of adenosine monophosphate (AMP) or uridine monophosphate (UMP) to a protein, resulting in modifications known as AMPylation and UMPylation. The protein is Protein nucleotidyltransferase YdiU of Aeromonas hydrophila subsp. hydrophila (strain ATCC 7966 / DSM 30187 / BCRC 13018 / CCUG 14551 / JCM 1027 / KCTC 2358 / NCIMB 9240 / NCTC 8049).